Reading from the N-terminus, the 511-residue chain is Protein HESO1 (511 aa).

The tract at residues 378-511 (ARPQNQQMQQ…GQIWRPRHEQ (134 aa)) is disordered. Low complexity predominate over residues 381–392 (QNQQMQQNWSQS). Over residues 404–465 (LTQSRPQQNW…TSAGSSQNQG (62 aa)) the composition is skewed to polar residues.

It belongs to the DNA polymerase type-B-like family.

The protein resides in the cytoplasm. Its subcellular location is the P-body. It is found in the nucleus. The catalysed reaction is RNA(n) + UTP = RNA(n)-3'-uridine ribonucleotide + diphosphate. With respect to regulation, completely inhibited by 2'-O-methylation on the substrate RNA. In terms of biological role, uridylates small RNAs to trigger their degradation. Catalyzes the uridylation of 5' fragments produced by AGO1-mediated cleavage of miRNA target RNAs. Acts synergistically with URT1 in unmethylated miRNA uridylation, leading to their degradation. URT1 and HESO1 prefer substrates with different 3' end nucleotides and act cooperatively to tail different forms of the same miRNAs. URT1 and HESO1 act sequentially, with URT1 mono-uridylating the miRNAs followed by their further uridylation by HESO1. URT1 and HESO1 are involved in the uridylation and clearance of RISC-generated 5' mRNA fragments. Able to act on AGO1-bound miRNAs and the uridylated species stay associated with AGO1. This chain is Protein HESO1, found in Arabidopsis thaliana (Mouse-ear cress).